A 392-amino-acid polypeptide reads, in one-letter code: O-phospho-L-seryl-tRNA:Cys-tRNA synthase (392 aa).

Pyridoxal 5'-phosphate is bound by residues 84 to 85 (AR), asparagine 191, and 214 to 216 (SGH). Lysine 217 carries the N6-(pyridoxal phosphate)lysine modification.

This sequence belongs to the SepCysS family. As to quaternary structure, homodimer. Interacts with SepRS. Requires pyridoxal 5'-phosphate as cofactor.

The enzyme catalyses O-phospho-L-seryl-tRNA(Cys) + hydrogen sulfide + H(+) = L-cysteinyl-tRNA(Cys) + phosphate. Its function is as follows. Converts O-phospho-L-seryl-tRNA(Cys) (Sep-tRNA(Cys)) to L-cysteinyl-tRNA(Cys) (Cys-tRNA(Cys)). The chain is O-phospho-L-seryl-tRNA:Cys-tRNA synthase from Methanopyrus kandleri (strain AV19 / DSM 6324 / JCM 9639 / NBRC 100938).